Here is a 202-residue protein sequence, read N- to C-terminus: Arenicin-1 (202 aa).

The signal sequence occupies residues methionine 1 to cysteine 25. Positions aspartate 26–arginine 181 are excised as a propeptide. The BRICHOS domain occupies glycine 73–leucine 168. Disulfide bonds link cysteine 100–cysteine 160 and cysteine 184–cysteine 201.

Has antimicrobial activity against the Gram-negative bacteria E.coli and P.mirabilis, the Gram-positive bacterium L.monocytogenes and the yeast C.albicans. This chain is Arenicin-1, found in Arenicola marina (Lugworm).